Reading from the N-terminus, the 1276-residue chain is Histone-lysine N-methyltransferase PRDM16 (1276 aa).

The span at 1–10 (MRSKARARKL) shows a compositional bias: basic residues. Positions 1–68 (MRSKARARKL…DFTPKEGSPY (68 aa)) are disordered. The SET domain occupies 82 to 211 (ADFELRESSI…PGEELLVHVK (130 aa)). The segment at 230–253 (FRCDECDELFQSKLDLRRHKKYTC) adopts a C2H2-type 1; atypical zinc-finger fold. 5 consecutive C2H2-type zinc fingers follow at residues 281–303 (HECK…MVIH), 309–331 (YKCD…QMSH), 337–360 (FECE…RSQH), 366–388 (HACP…KHIH), and 394–416 (FICE…KRMH). The segment at 423-445 (IKCKDCGQMFSTTSSLNKHRRFC) adopts a C2H2-type 7; atypical zinc-finger fold. Disordered stretches follow at residues 533–657 (SLLK…APPG) and 772–804 (PFDL…QPLD). Polar residues predominate over residues 561-570 (AVSNSSQGTT). Residues 575-597 (PEEKFESRLEDSCVEKLKTRSSD) are compositionally biased toward basic and acidic residues. Over residues 609–624 (TTTGTDLDTTTGTGSD) the composition is skewed to low complexity. Positions 632 to 642 (DPDKDKGKGKS) are enriched in basic and acidic residues. The tract at residues 679 to 1038 (DEQLLTATGA…KHEHENAPVS (360 aa)) is interaction with CTBP1, CTBP2 and ZNF516. A mediates interaction with SKI and regulation of TGF-beta signaling region spans residues 739 to 1276 (PFTDRALAHN…SGAFHPINHL (538 aa)). 3 consecutive C2H2-type zinc fingers follow at residues 951–973 (YTCR…LRTH), 979–1002 (YRCK…RNIH), and 1008–1032 (FKCH…KHEH). 2 disordered regions span residues 1033–1065 (ENAP…HALL) and 1105–1163 (AQCP…EPAA). Positions 1047-1058 (HLGTSASSPTSE) are enriched in polar residues. Acidic residues predominate over residues 1116-1133 (EDVEEEDDDDLEEDDEDS).

The protein belongs to the PRDM16 family. Interacts with CEBPA, CEBPB and CEBPD; the interaction is direct. Interacts with PPARG and PPARA; controls brown adipocytes differentiation. Interacts with CTBP1 and CTBP2; represses the expression of WAT-specific genes. Interacts with PPARGC1A and PPARGC1B; interaction with PPARGC1A or PPARGC1B activates the transcription of BAT-specific gene. Interacts with HDAC1, SKI, SMAD2 and SMAD3; the interaction with SKI promotes the recruitment of SMAD3-HDAC1 complex on the promoter of TGF-beta target genes. Interacts with ZNF516; the interaction is direct and may play a role in the transcription of brown adipose tissue-specific gene. As to expression, expressed in uterus and kidney. Expressed in both cardiomyocytes and interstitial cells.

It localises to the nucleus. Its subcellular location is the cytoplasm. It carries out the reaction L-lysyl(9)-[histone H3] + S-adenosyl-L-methionine = N(6)-methyl-L-lysyl(9)-[histone H3] + S-adenosyl-L-homocysteine + H(+). Functionally, binds DNA and functions as a transcriptional regulator. Displays histone methyltransferase activity and monomethylates 'Lys-9' of histone H3 (H3K9me1) in vitro. Probably catalyzes the monomethylation of free histone H3 in the cytoplasm which is then transported to the nucleus and incorporated into nucleosomes where SUV39H methyltransferases use it as a substrate to catalyze histone H3 'Lys-9' trimethylation. Likely to be one of the primary histone methyltransferases along with MECOM/PRDM3 that direct cytoplasmic H3K9me1 methylation. Functions in the differentiation of brown adipose tissue (BAT) which is specialized in dissipating chemical energy in the form of heat in response to cold or excess feeding while white adipose tissue (WAT) is specialized in the storage of excess energy and the control of systemic metabolism. Together with CEBPB, regulates the differentiation of myoblastic precursors into brown adipose cells. Functions as a repressor of TGF-beta signaling. In terms of biological role, binds DNA and functions as a transcriptional regulator. Functions as a repressor of TGF-beta signaling. May regulate granulocyte differentiation. This is Histone-lysine N-methyltransferase PRDM16 from Homo sapiens (Human).